The sequence spans 527 residues: ATP synthase subunit alpha (527 aa).

Position 172–179 (172–179 (GDRQTGKT)) interacts with ATP.

This sequence belongs to the ATPase alpha/beta chains family. As to quaternary structure, F-type ATPases have 2 components, CF(1) - the catalytic core - and CF(0) - the membrane proton channel. CF(1) has five subunits: alpha(3), beta(3), gamma(1), delta(1), epsilon(1). CF(0) has three main subunits: a(1), b(2) and c(9-12). The alpha and beta chains form an alternating ring which encloses part of the gamma chain. CF(1) is attached to CF(0) by a central stalk formed by the gamma and epsilon chains, while a peripheral stalk is formed by the delta and b chains.

The protein localises to the cell inner membrane. It catalyses the reaction ATP + H2O + 4 H(+)(in) = ADP + phosphate + 5 H(+)(out). Produces ATP from ADP in the presence of a proton gradient across the membrane. The alpha chain is a regulatory subunit. This chain is ATP synthase subunit alpha, found in Bacteroides thetaiotaomicron (strain ATCC 29148 / DSM 2079 / JCM 5827 / CCUG 10774 / NCTC 10582 / VPI-5482 / E50).